Reading from the N-terminus, the 94-residue chain is Secretoglobin family 1C member 1 (94 aa).

The N-terminal stretch at 1–22 is a signal peptide; sequence MKGSSALLVALTVLCICGLTRA.

Belongs to the secretoglobin family. In terms of tissue distribution, expressed in the olfactory mucosa.

Its subcellular location is the secreted. This is Secretoglobin family 1C member 1 (Scgb1c1) from Rattus norvegicus (Rat).